Reading from the N-terminus, the 907-residue chain is MPLRLEIKRKFAQRSERVKSVDLHPTEPWILSSLYSGSVCIWDYQSQTMVKSFEVSELPVRSAKFISRKQWVVAGADDMFIRVYNYNTMDKVKVFEAHTDYIRCVAVHPTLPYVLSSSDDMLIKLWDWDKGWMCTQIFEGHSHYVMQVTFNPKDTNTFASASLDRTTKIWSLGSPDPNFTLDGHQKGVNCVDYFTGGDRPYLITGSDDSTAKVWDYQTKSCVQTLEGHTHNISAVCFHPELPIIITGSEDGTVRIWHSTTYRLENTLNYGLERVWAVGYMKGSRRMVIGYDEGTIMIKMGREVPVASMDTSGKIIWAKHNEIQTVNIKTVGAGFEVTDGERLPLAVKELGSCDLYPQSLKHNPNGRFVVVCGDGEFIIYTALAWRNRSFGSALEFVWSSEGEYAIRESTSRIKIFSKSFQEKKTIRPTFSAERIFGGILLAMCSSDFICFYDWADCRLIRRIDVNVKNLYWADSGDLVAIASDTSFYILKYNRDVVASYLESGKPVDEEGVEDAFELLHEVNERVRTGIWVGDCFIYNNSSWRLNYCVGGEVTTMYHLDRPMYLLGYLANQSRVYLIDKEFNVMGYTLLLSLIEYKTLVMRGDIERANDILPSIPKAQYNNVAHFLESRGMLEEALEIATDADYRFDLAVQLGKLEVAKAIAMEAQSESKWKQLGELAMSTGKLDMAEECLVQAKDLSGLLLLYSSLGDAEGIEKLASQAKEHGKNNVAFLCLFMLGKLEDCIQLLIDSNRIPEAALMARSYLPSKVSEIVAIWRNDLSKVNPKAAESLADPSEYPNLFEDWQVALTVEKNVASRRVHYPPADEYLNHAEKSDMTLVEAFKRMQVIEDEETEDALDENGEPDEEVLEENKVEESTDEAVEVDADEPEETVLVNGKEGEEQWVLTEHE.

9 WD repeats span residues 13–52 (QRSE…MVKS), 55–94 (VSEL…KVKV), 97–136 (AHTD…MCTQ), 140–180 (GHSH…PNFT), 183–224 (GHQK…CVQT), 227–266 (GHTH…LENT), 269–309 (YGLE…ASMD), 351–389 (SCDL…NRSF), and 461–501 (RIDV…SYLE). Composition is skewed to acidic residues over residues 850-866 (ETED…EEVL) and 874-887 (STDE…DEPE). The tract at residues 850–887 (ETEDALDENGEPDEEVLEENKVEESTDEAVEVDADEPE) is disordered.

It belongs to the WD repeat COPB2 family. As to quaternary structure, oligomeric complex that consists of at least the alpha, beta, beta', gamma, delta, epsilon and zeta subunits.

It is found in the cytoplasm. It localises to the golgi apparatus membrane. Its subcellular location is the cytoplasmic vesicle. The protein localises to the COPI-coated vesicle membrane. In terms of biological role, the coatomer is a cytosolic protein complex that binds to dilysine motifs and reversibly associates with Golgi non-clathrin-coated vesicles, which further mediate biosynthetic protein transport from the ER, via the Golgi up to the trans Golgi network. Coatomer complex is required for budding from Golgi membranes, and is essential for the retrograde Golgi-to-ER transport of dilysine-tagged proteins. In Oryza sativa subsp. japonica (Rice), this protein is Coatomer subunit beta'-1.